The primary structure comprises 223 residues: Pre-hexon-linking protein VIII (223 aa).

A Phosphothreonine; by host modification is found at Thr64. Residues 112–153 (GALAPRDLYALTLRGRGIQLNEDLPLSASTLRPDGIFQLGGG) constitute a propeptide that is removed on maturation. A Phosphoserine; by host modification is found at Ser170.

This sequence belongs to the adenoviridae hexon-linking protein family. Interacts with the peripentonal hexons as well as the hexons in the facets. Part of a complex composed of the core-capsid bridging protein, the endosome lysis protein VI and the hexon-linking protein VIII; these interactions bridge the virus core to the capsid. In terms of processing, cleaved by the viral protease during virion maturation. May cause the middle segment to be shed from the capsid.

The protein localises to the virion. It localises to the host nucleus. In terms of biological role, structural component of the virion that acts as a cement protein on the capsid interior and which glue the peripentonal hexons and group-of-nine hexons together. The chain is Pre-hexon-linking protein VIII from Porcine adenovirus A serotype 3 (PAdV-3).